We begin with the raw amino-acid sequence, 246 residues long: Small ribosomal subunit protein uS3 (246 aa).

Residues 19–98 enclose the KH type-2 domain; sequence IDEWLAQNFY…NPMLDARVQA (80 aa). The disordered stretch occupies residues 218 to 246; it reads LQEETASTLREHMEAARPGEEHEEDREES. A compositionally biased stretch (basic and acidic residues) spans 226 to 237; it reads LREHMEAARPGE.

The protein belongs to the universal ribosomal protein uS3 family. Part of the 30S ribosomal subunit.

Binds the lower part of the 30S subunit head. This Aeropyrum pernix (strain ATCC 700893 / DSM 11879 / JCM 9820 / NBRC 100138 / K1) protein is Small ribosomal subunit protein uS3.